A 529-amino-acid chain; its full sequence is Probable cytochrome P450 6t1 (529 aa).

Residue Cys-472 participates in heme binding.

Belongs to the cytochrome P450 family. Heme serves as cofactor.

It is found in the endoplasmic reticulum membrane. The protein localises to the microsome membrane. Its function is as follows. May be involved in the metabolism of insect hormones and in the breakdown of synthetic insecticides. The chain is Probable cytochrome P450 6t1 (Cyp6t1) from Drosophila melanogaster (Fruit fly).